The sequence spans 335 residues: Tetraacyldisaccharide 4'-kinase (335 aa).

Position 59-66 (Thr-59–Thr-66) interacts with ATP.

The protein belongs to the LpxK family.

The enzyme catalyses a lipid A disaccharide + ATP = a lipid IVA + ADP + H(+). It participates in glycolipid biosynthesis; lipid IV(A) biosynthesis; lipid IV(A) from (3R)-3-hydroxytetradecanoyl-[acyl-carrier-protein] and UDP-N-acetyl-alpha-D-glucosamine: step 6/6. Transfers the gamma-phosphate of ATP to the 4'-position of a tetraacyldisaccharide 1-phosphate intermediate (termed DS-1-P) to form tetraacyldisaccharide 1,4'-bis-phosphate (lipid IVA). The sequence is that of Tetraacyldisaccharide 4'-kinase from Vibrio parahaemolyticus serotype O3:K6 (strain RIMD 2210633).